The following is an 89-amino-acid chain: Large ribosomal subunit protein bL27 (89 aa).

The segment at 1–21 (MAHKKAGGSSRNGRDTEGRRL) is disordered.

This sequence belongs to the bacterial ribosomal protein bL27 family.

The sequence is that of Large ribosomal subunit protein bL27 from Granulibacter bethesdensis (strain ATCC BAA-1260 / CGDNIH1).